The sequence spans 464 residues: NADH-ubiquinone oxidoreductase chain 4 (464 aa).

Transmembrane regions (helical) follow at residues 18–38 (LLPTYGKGLILVASILVVLPT), 54–74 (IADIFILLTAYLLPLSIIANW), 79–99 (SLLYFELILNLGVILLINFMC), 102–122 (MLSFYVYFEISLAPLFILIGL), 131–151 (AADYILIYTLFSSLFMLLAIG), 168–188 (VVLSTDLQCILFLCISAGIMV), 207–227 (PLAGSMLLAGVILKLAVYAII), 239–259 (VLYTPVVYVICAITIIYTSII), 266–286 (LKVIVAYSSISHMAVCILGIL), 297–317 (LILSLAHGFVSPALFIIVGGI), 332–352 (GLLTYMPILAIYLLILSFSNI), 375–395 (TILGCISAFSVLLSAAYMLKV), and 420–440 (LLMIALIIPTLWYGLYPNGII).

Belongs to the complex I subunit 4 family.

Its subcellular location is the mitochondrion membrane. The enzyme catalyses a ubiquinone + NADH + 5 H(+)(in) = a ubiquinol + NAD(+) + 4 H(+)(out). Core subunit of the mitochondrial membrane respiratory chain NADH dehydrogenase (Complex I) that is believed to belong to the minimal assembly required for catalysis. Complex I functions in the transfer of electrons from NADH to the respiratory chain. The immediate electron acceptor for the enzyme is believed to be ubiquinone. This chain is NADH-ubiquinone oxidoreductase chain 4 (NAD4), found in Candida albicans (strain SC5314 / ATCC MYA-2876) (Yeast).